The sequence spans 275 residues: Dermonecrotic toxin LamSicTox-alphaIV1i (275 aa).

His5 is an active-site residue. Residues Glu25 and Asp27 each contribute to the Mg(2+) site. His41 serves as the catalytic Nucleophile. 2 disulfide bridges follow: Cys45–Cys51 and Cys47–Cys192. Asp85 lines the Mg(2+) pocket.

The protein belongs to the arthropod phospholipase D family. Class II subfamily. Mg(2+) is required as a cofactor. As to expression, expressed by the venom gland.

Its subcellular location is the secreted. It carries out the reaction an N-(acyl)-sphingosylphosphocholine = an N-(acyl)-sphingosyl-1,3-cyclic phosphate + choline. The enzyme catalyses an N-(acyl)-sphingosylphosphoethanolamine = an N-(acyl)-sphingosyl-1,3-cyclic phosphate + ethanolamine. It catalyses the reaction a 1-acyl-sn-glycero-3-phosphocholine = a 1-acyl-sn-glycero-2,3-cyclic phosphate + choline. The catalysed reaction is a 1-acyl-sn-glycero-3-phosphoethanolamine = a 1-acyl-sn-glycero-2,3-cyclic phosphate + ethanolamine. Its function is as follows. Dermonecrotic toxins cleave the phosphodiester linkage between the phosphate and headgroup of certain phospholipids (sphingolipid and lysolipid substrates), forming an alcohol (often choline) and a cyclic phosphate. This toxin acts on sphingomyelin (SM). It may also act on ceramide phosphoethanolamine (CPE), lysophosphatidylcholine (LPC) and lysophosphatidylethanolamine (LPE), but not on lysophosphatidylserine (LPS), and lysophosphatidylglycerol (LPG). It acts by transphosphatidylation, releasing exclusively cyclic phosphate products as second products. Induces dermonecrosis, hemolysis, increased vascular permeability, edema, inflammatory response, and platelet aggregation. This Loxosceles amazonica (Recluse spider) protein is Dermonecrotic toxin LamSicTox-alphaIV1i.